A 247-amino-acid polypeptide reads, in one-letter code: Neurotrophic factor BDNF precursor form (247 aa).

Positions 1 to 18 (MTILFLTMVISYFGCMKA) are cleaved as a signal peptide. Positions 19 to 128 (APMKEANVRG…AANMSMRVRR (110 aa)) are excised as a propeptide. Asn121 carries N-linked (GlcNAc...) asparagine glycosylation. Intrachain disulfides connect Cys141–Cys208, Cys186–Cys237, and Cys196–Cys239.

This sequence belongs to the NGF-beta family. As to quaternary structure, monomers and homodimers. Binds to NTRK2/TRKB. Can form heterodimers with other neurotrophin family members, such as NTF3 and NTF4 (in vitro), but the physiological relevance of this is not clear. BDNF precursor form: interacts with the heterodimer formed by NGFR and SORCS2. Mature BDNF has much lower affinity for the heterodimer formed by NGFR and SORCS2. Post-translationally, N-glycosylated and glycosulfated, contrary to mature BDNF. In terms of processing, mature BDNF is produced by proteolytic removal of the propeptide, catalyzed by a FURIN family member. In addition, the precursor form is proteolytically cleaved within the propeptide, but this is not an obligatory intermediate for the production of mature BDNF. Can be converted into mature BDNF by plasmin (PLG).

It localises to the secreted. Functionally, important signaling molecule that activates signaling cascades downstream of NTRK2. During development, promotes the survival and differentiation of selected neuronal populations of the peripheral and central nervous systems. Participates in axonal growth, pathfinding and in the modulation of dendritic growth and morphology. Major regulator of synaptic transmission and plasticity at adult synapses in many regions of the CNS. The versatility of BDNF is emphasized by its contribution to a range of adaptive neuronal responses including long-term potentiation (LTP), long-term depression (LTD), certain forms of short-term synaptic plasticity, as well as homeostatic regulation of intrinsic neuronal excitability. In terms of biological role, important signaling molecule that activates signaling cascades downstream of NTRK2. Activates signaling cascades via the heterodimeric receptor formed by NGFR and SORCS2. Signaling via NGFR and SORCS2 plays a role in synaptic plasticity and long-term depression (LTD). Binding to NGFR and SORCS2 promotes neuronal apoptosis. Promotes neuronal growth cone collapse. The sequence is that of Neurotrophic factor BDNF precursor form (BDNF) from Ailuropoda melanoleuca (Giant panda).